The chain runs to 597 residues: Cytosolic Fe-S cluster assembly factor nar1 (597 aa).

6 residues coordinate [4Fe-4S] cluster: Cys20, Cys61, Cys64, Cys67, Cys209, and Cys264. Residues 419–447 form a disordered region; it reads PARASRLPGARQSATSAGGSRRQLASRNA. Residues 430-447 are compositionally biased toward polar residues; that stretch reads QSATSAGGSRRQLASRNA. [4Fe-4S] cluster-binding residues include Cys464 and Cys468. The segment at 482–504 is disordered; that stretch reads EAASNMSVESQTEPPEAALKPTP. The span at 485-494 shows a compositional bias: polar residues; it reads SNMSVESQTE.

Belongs to the NARF family.

Functionally, component of the cytosolic Fe/S protein assembly machinery. Required for maturation of extramitochondrial Fe/S proteins. May play a role in the transfer of pre-assembled Fe/S clusters to target apoproteins. This is Cytosolic Fe-S cluster assembly factor nar1 (nar1) from Aspergillus clavatus (strain ATCC 1007 / CBS 513.65 / DSM 816 / NCTC 3887 / NRRL 1 / QM 1276 / 107).